A 929-amino-acid polypeptide reads, in one-letter code: Chaperone protein ClpC1, chloroplastic (929 aa).

The transit peptide at 1 to 38 (MAMATRVLAQSTPPSLACYQRNVPSRGSGRSRRSVKMM) directs the protein to the chloroplast. One can recognise a Clp R domain in the interval 95 to 237 (FERFTEKAIK…RTQVIRMVGE (143 aa)). 2 repeat regions span residues 98 to 163 (FTEK…IGRG) and 173 to 237 (FTPR…MVGE). The segment at 257 to 504 (LEEYGTNLTK…RVRLRHAQVP (248 aa)) is i. Residue 302–309 (GEPGVGKT) coordinates ATP. The 36-residue stretch at 511–546 (EKELRQITKEKNEAVRGQDFEKAGTLRDREIELRAE) folds into the UVR domain. The segment at 552–571 (AKGKEMSKAESETGEEGPMV) is disordered. Basic and acidic residues predominate over residues 553–562 (KGKEMSKAES). The segment at 571-762 (VTESDIQHIV…LLIMTSNVGS (192 aa)) is II. 645-652 (GPTGVGKS) contributes to the ATP binding site. Residues 908 to 919 (LNGGSGTPTTSL) are compositionally biased toward polar residues. The segment at 908–929 (LNGGSGTPTTSLEEQEDSLPVA) is disordered. The segment covering 920 to 929 (EEQEDSLPVA) has biased composition (acidic residues).

The protein belongs to the ClpA/ClpB family. ClpC subfamily. In terms of assembly, homodimer. May form hexamer and interact with Clp core. Interacts (via N-terminus) with CLPS1. Interacts with CLPF. In terms of tissue distribution, highly expressed in rosette leaves. Expressed in roots, stems and inflorescences. Expressed in photosynthetic green tissues with high levels in young, developing leaf tissues.

The protein localises to the plastid. It localises to the chloroplast stroma. Its subcellular location is the chloroplast membrane. Its function is as follows. Molecular chaperone that hydrolyzes ATP and is associated with the chloroplast protein import apparatus. May function as the motor for chloroplast protein translocation, as translocation requires ATP hydrolysis in the stroma. May interact with a ClpP-like protease involved in degradation of denatured proteins in the chloroplast. Involved in the regulation of chlorophyll b biosynthesis through the destabilization of chlorophyllide a oxygenase (CAO) protein in response to the accumulation of chlorophyll b. Involved in leaf iron homeostasis. The chain is Chaperone protein ClpC1, chloroplastic from Arabidopsis thaliana (Mouse-ear cress).